Consider the following 69-residue polypeptide: Conotoxin Cal12.1p4 (69 aa).

The propeptide occupies 1-23 (DLITNSYTRGKPRHVTSWRNLKT).

In terms of processing, contains 4 disulfide bonds. As to expression, expressed by the venom duct.

It localises to the secreted. This chain is Conotoxin Cal12.1p4, found in Californiconus californicus (California cone).